A 400-amino-acid chain; its full sequence is Acetate kinase (400 aa).

Residue Asn-10 participates in Mg(2+) binding. Lys-17 is an ATP binding site. Arg-89 is a substrate binding site. Asp-148 acts as the Proton donor/acceptor in catalysis. ATP-binding positions include His-208–Gly-212, Asp-283–Arg-285, and Gly-331–Asn-335. Glu-385 provides a ligand contact to Mg(2+).

The protein belongs to the acetokinase family. Homodimer. The cofactor is Mg(2+). Mn(2+) serves as cofactor.

The protein localises to the cytoplasm. It carries out the reaction acetate + ATP = acetyl phosphate + ADP. It participates in metabolic intermediate biosynthesis; acetyl-CoA biosynthesis; acetyl-CoA from acetate: step 1/2. Catalyzes the formation of acetyl phosphate from acetate and ATP. Can also catalyze the reverse reaction. This chain is Acetate kinase, found in Haemophilus ducreyi (strain 35000HP / ATCC 700724).